Consider the following 466-residue polypeptide: Neuropeptide Y receptor type 5 (466 aa).

Residues 1-63 (MEVKLEEHFN…YRGSVDDLQY (63 aa)) are Extracellular-facing. 4 N-linked (GlcNAc...) asparagine glycosylation sites follow: N10, N17, N38, and N39. The helical transmembrane segment at 64–84 (FLIGLYTFVSLLGFMGNLLIL) threads the bilayer. The Cytoplasmic segment spans residues 85–98 (MAVMKKRNQKTTVN). Residues 99 to 119 (FLIGNLAFSDILVVLFCSPFT) form a helical membrane-spanning segment. Residues 120–138 (LTSVLLDQWMFGKAMCHIM) are Extracellular-facing. A disulfide bridge connects residues C135 and C219. A helical membrane pass occupies residues 139–159 (PFLQCVSVLVSTLILISIAIV). The Cytoplasmic segment spans residues 160-177 (RYHMIKHPISNNLTANHG). The helical transmembrane segment at 178 to 198 (YFLIATVWTLGFAICSPLPVF) threads the bilayer. Topologically, residues 199–229 (HSLVELKETFGSALLSSKYLCVESWPSDSYR) are extracellular. The chain crosses the membrane as a helical span at residues 230 to 250 (IAFTISLLLVQYILPLVCLTV). Over 251 to 389 (SHTSVCRSIS…KKRSRSVFYR (139 aa)) the chain is Cytoplasmic. Positions 323 to 346 (GPSQEKHLTVPENPGSVRSQLSPS) are disordered. Residues 390-410 (LTILILVFAVSWMPLHVFHVV) traverse the membrane as a helical segment. Topologically, residues 411–427 (TDFNDNLISNRHFKLVY) are extracellular. A helical transmembrane segment spans residues 428–448 (CICHLLGMMSCCLNPILYGFL). At 449–466 (NNGIKADLRALIHCLHMS) the chain is on the cytoplasmic side. C462 carries the S-palmitoyl cysteine lipid modification.

Belongs to the G-protein coupled receptor 1 family.

It is found in the cell membrane. Its function is as follows. Receptor for neuropeptide Y and peptide YY. The activity of this receptor is mediated by G proteins that inhibit adenylate cyclase activity. Seems to be associated with food intake. Could be involved in feeding disorders. In Mus musculus (Mouse), this protein is Neuropeptide Y receptor type 5 (Npy5r).